The chain runs to 444 residues: Adenylosuccinate synthetase (444 aa).

Residues 12–18 (GDEGKGK) and 40–42 (GHT) each bind GTP. D13 functions as the Proton acceptor in the catalytic mechanism. D13 and G40 together coordinate Mg(2+). Residues 13 to 16 (DEGK), 38 to 41 (NAGH), T128, R142, Q223, T238, and R302 contribute to the IMP site. H41 acts as the Proton donor in catalysis. 298–304 (TTTGRRR) lines the substrate pocket. Residues R304, 330–332 (KLD), and 412–414 (SLG) contribute to the GTP site.

The protein belongs to the adenylosuccinate synthetase family. As to quaternary structure, homodimer. Mg(2+) is required as a cofactor.

The protein resides in the cytoplasm. The catalysed reaction is IMP + L-aspartate + GTP = N(6)-(1,2-dicarboxyethyl)-AMP + GDP + phosphate + 2 H(+). Its pathway is purine metabolism; AMP biosynthesis via de novo pathway; AMP from IMP: step 1/2. Functionally, plays an important role in the de novo pathway of purine nucleotide biosynthesis. Catalyzes the first committed step in the biosynthesis of AMP from IMP. In Synechococcus sp. (strain ATCC 27144 / PCC 6301 / SAUG 1402/1) (Anacystis nidulans), this protein is Adenylosuccinate synthetase.